The following is a 210-amino-acid chain: TM2 domain-containing protein C02F5.13 (210 aa).

An N-terminal signal peptide occupies residues 1-18 (MRRLPWLIPFFLVNISNG). The Extracellular segment spans residues 19–138 (NNEFRIEFEY…PRTFTKSTPC (120 aa)). Asn91 carries N-linked (GlcNAc...) asparagine glycosylation. A helical membrane pass occupies residues 139–159 (IIYNGHYFLTTLLYSIFLGVV). Residues 143–191 (GHYFLTTLLYSIFLGVVAVDRFCLGYSAMAVGKLMTLGGFGIWWIVDIF) form the TM2 domain. At 160–178 (AVDRFCLGYSAMAVGKLMT) the chain is on the cytoplasmic side. Residues 179–199 (LGGFGIWWIVDIFLLVLGVLG) form a helical membrane-spanning segment. The Extracellular segment spans residues 200 to 210 (PADDSSWEPYY).

Belongs to the TM2 family.

It is found in the membrane. The chain is TM2 domain-containing protein C02F5.13 from Caenorhabditis elegans.